The primary structure comprises 480 residues: Aspartyl/glutamyl-tRNA(Asn/Gln) amidotransferase subunit B (480 aa).

Belongs to the GatB/GatE family. GatB subfamily. Heterotrimer of A, B and C subunits.

It catalyses the reaction L-glutamyl-tRNA(Gln) + L-glutamine + ATP + H2O = L-glutaminyl-tRNA(Gln) + L-glutamate + ADP + phosphate + H(+). The catalysed reaction is L-aspartyl-tRNA(Asn) + L-glutamine + ATP + H2O = L-asparaginyl-tRNA(Asn) + L-glutamate + ADP + phosphate + 2 H(+). Allows the formation of correctly charged Asn-tRNA(Asn) or Gln-tRNA(Gln) through the transamidation of misacylated Asp-tRNA(Asn) or Glu-tRNA(Gln) in organisms which lack either or both of asparaginyl-tRNA or glutaminyl-tRNA synthetases. The reaction takes place in the presence of glutamine and ATP through an activated phospho-Asp-tRNA(Asn) or phospho-Glu-tRNA(Gln). In Saccharophagus degradans (strain 2-40 / ATCC 43961 / DSM 17024), this protein is Aspartyl/glutamyl-tRNA(Asn/Gln) amidotransferase subunit B.